The sequence spans 132 residues: Small ribosomal subunit protein uS8 (132 aa).

It belongs to the universal ribosomal protein uS8 family. In terms of assembly, part of the 30S ribosomal subunit. Contacts proteins S5 and S12.

Its function is as follows. One of the primary rRNA binding proteins, it binds directly to 16S rRNA central domain where it helps coordinate assembly of the platform of the 30S subunit. In Afipia carboxidovorans (strain ATCC 49405 / DSM 1227 / KCTC 32145 / OM5) (Oligotropha carboxidovorans), this protein is Small ribosomal subunit protein uS8.